A 203-amino-acid polypeptide reads, in one-letter code: Lipoprotein MlpJ (203 aa).

Residues 1-17 (MKIINILFCISLLLLNS) form the signal peptide. The N-palmitoyl cysteine moiety is linked to residue Cys-18. The S-diacylglycerol cysteine moiety is linked to residue Cys-18. The interval 26-47 (LKNNAQQTKSRKKRDLSQEELP) is disordered.

It belongs to the Multicopy lipoprotein (Mlp) family.

The protein resides in the cell outer membrane. Its function is as follows. An outer membrane protein that may participate in pathogenesis. Some human Lyme disease patients have antibodies against this protein. The Mlp proteins probably undergo intragenic recombination, generating new alleles. The protein is Lipoprotein MlpJ of Borreliella burgdorferi (strain ATCC 35210 / DSM 4680 / CIP 102532 / B31) (Borrelia burgdorferi).